The sequence spans 224 residues: 7-cyano-7-deazaguanine synthase (224 aa).

10–20 (LSGGLDSATVV) lines the ATP pocket. Zn(2+) contacts are provided by cysteine 189, cysteine 199, cysteine 202, and cysteine 205.

The protein belongs to the QueC family. Zn(2+) serves as cofactor.

It carries out the reaction 7-carboxy-7-deazaguanine + NH4(+) + ATP = 7-cyano-7-deazaguanine + ADP + phosphate + H2O + H(+). The protein operates within purine metabolism; 7-cyano-7-deazaguanine biosynthesis. In terms of biological role, catalyzes the ATP-dependent conversion of 7-carboxy-7-deazaguanine (CDG) to 7-cyano-7-deazaguanine (preQ(0)). In Pseudomonas fluorescens (strain SBW25), this protein is 7-cyano-7-deazaguanine synthase.